Consider the following 315-residue polypeptide: tRNA dimethylallyltransferase (315 aa).

10-17 (GPTASGKS) is an ATP binding site. Position 12-17 (12-17 (TASGKS)) interacts with substrate. The segment at 35–38 (DSMQ) is interaction with substrate tRNA.

The protein belongs to the IPP transferase family. As to quaternary structure, monomer. Mg(2+) serves as cofactor.

It carries out the reaction adenosine(37) in tRNA + dimethylallyl diphosphate = N(6)-dimethylallyladenosine(37) in tRNA + diphosphate. In terms of biological role, catalyzes the transfer of a dimethylallyl group onto the adenine at position 37 in tRNAs that read codons beginning with uridine, leading to the formation of N6-(dimethylallyl)adenosine (i(6)A). This chain is tRNA dimethylallyltransferase, found in Thermoanaerobacter pseudethanolicus (strain ATCC 33223 / 39E) (Clostridium thermohydrosulfuricum).